The primary structure comprises 95 residues: Sec-independent protein translocase protein TatA (95 aa).

Residues 1-21 (MGSMSVWHWVIVAVVVMLLFG) form a helical membrane-spanning segment. Positions 42–95 (GMADDETQPNTATSVPPVGPNDPVRTLPHQGAPGTAPQPPHVQPHVPAGDHKAV) are disordered.

Belongs to the TatA/E family. As to quaternary structure, the Tat system comprises two distinct complexes: a TatABC complex, containing multiple copies of TatA, TatB and TatC subunits, and a separate TatA complex, containing only TatA subunits. Substrates initially bind to the TatABC complex, which probably triggers association of the separate TatA complex to form the active translocon.

It localises to the cell inner membrane. Functionally, part of the twin-arginine translocation (Tat) system that transports large folded proteins containing a characteristic twin-arginine motif in their signal peptide across membranes. TatA could form the protein-conducting channel of the Tat system. The sequence is that of Sec-independent protein translocase protein TatA from Methylorubrum extorquens (strain PA1) (Methylobacterium extorquens).